The chain runs to 419 residues: MSRSAEVICVGTELLLGEVLNSNAQFLGQELARLGIAHFHQTVVGDNPTRIKRAIALACQRSQLLIFTGGLGPTPDDLTTETLADFFQAPLVNHPEILEDIARKFAQRNRVPSPSNDKQALLPDGAQILPNPIGSAPGIIWHPRPELTIFTFPGVPKEFHRMWQETAVPYLQSTGWVTAQIYSRVLRFWGIPESTLADQVAPLLALTNPTVAPYASKGQARLRISTRATSQETAHQVIAPIEQQIRQICGLHCFGGDDETLESVVGKLLQQRGETLAVAESCTGGGLGQRITGVSGSSTYFLGGVISYTNAAKRDLLKVNAADLEQYGAVSAIVAEQMAAGVRSQLHSTWGISITGIAGPDGGSETKPVGLVYIGLSGPQGTQSFEYQISPLRGRDWIRQMSTSHALDRLRRQLLADES.

Belongs to the CinA family.

The chain is CinA-like protein from Acaryochloris marina (strain MBIC 11017).